The following is a 346-amino-acid chain: tRNA pseudouridine synthase D (346 aa).

D83 (nucleophile) is an active-site residue. Residues 159–305 form the TRUD domain; the sequence is GVPNYFGEQR…LKQERRALRV (147 aa).

The protein belongs to the pseudouridine synthase TruD family.

It catalyses the reaction uridine(13) in tRNA = pseudouridine(13) in tRNA. In terms of biological role, responsible for synthesis of pseudouridine from uracil-13 in transfer RNAs. This Hydrogenovibrio crunogenus (strain DSM 25203 / XCL-2) (Thiomicrospira crunogena) protein is tRNA pseudouridine synthase D.